A 316-amino-acid polypeptide reads, in one-letter code: HPr kinase/phosphorylase (316 aa).

Residues His143 and Lys164 contribute to the active site. 158 to 165 provides a ligand contact to ATP; that stretch reads GEAGSGKS. Ser165 contacts Mg(2+). Catalysis depends on Asp182, which acts as the Proton acceptor; for phosphorylation activity. Proton donor; for dephosphorylation activity. An important for the catalytic mechanism of both phosphorylation and dephosphorylation region spans residues 206 to 215; that stretch reads LEVRGLGVLN. Glu207 is a Mg(2+) binding site. The active site involves Arg251. The interval 272–277 is important for the catalytic mechanism of dephosphorylation; sequence PVMPGR.

Belongs to the HPrK/P family. Homohexamer. Requires Mg(2+) as cofactor.

It catalyses the reaction [HPr protein]-L-serine + ATP = [HPr protein]-O-phospho-L-serine + ADP + H(+). The enzyme catalyses [HPr protein]-O-phospho-L-serine + phosphate + H(+) = [HPr protein]-L-serine + diphosphate. Functionally, catalyzes the ATP- as well as the pyrophosphate-dependent phosphorylation of a specific serine residue in HPr, a phosphocarrier protein of the phosphoenolpyruvate-dependent sugar phosphotransferase system (PTS). HprK/P also catalyzes the pyrophosphate-producing, inorganic phosphate-dependent dephosphorylation (phosphorolysis) of seryl-phosphorylated HPr (P-Ser-HPr). The chain is HPr kinase/phosphorylase from Xanthomonas campestris pv. campestris (strain 8004).